Consider the following 353-residue polypeptide: tRNA N6-adenosine threonylcarbamoyltransferase (353 aa).

Positions 109 and 113 each coordinate Fe cation. Substrate-binding positions include 136–140 (TVSGG), Asp169, Gly182, Asp186, and Asn284. Asp312 contacts Fe cation.

It belongs to the KAE1 / TsaD family. It depends on Fe(2+) as a cofactor.

The protein resides in the cytoplasm. The catalysed reaction is L-threonylcarbamoyladenylate + adenosine(37) in tRNA = N(6)-L-threonylcarbamoyladenosine(37) in tRNA + AMP + H(+). In terms of biological role, required for the formation of a threonylcarbamoyl group on adenosine at position 37 (t(6)A37) in tRNAs that read codons beginning with adenine. Is involved in the transfer of the threonylcarbamoyl moiety of threonylcarbamoyl-AMP (TC-AMP) to the N6 group of A37, together with TsaE and TsaB. TsaD likely plays a direct catalytic role in this reaction. The protein is tRNA N6-adenosine threonylcarbamoyltransferase of Chlorobium limicola (strain DSM 245 / NBRC 103803 / 6330).